We begin with the raw amino-acid sequence, 296 residues long: Class E basic helix-loop-helix protein 22 (296 aa).

The interval S26 to A70 is disordered. The bHLH domain occupies T153 to Q207.

It localises to the nucleus. May act as a transcriptional repressor. In Xenopus tropicalis (Western clawed frog), this protein is Class E basic helix-loop-helix protein 22 (bhlhe22).